The sequence spans 312 residues: Bifunctional pinoresinol-lariciresinol reductase (312 aa).

NADP(+) contacts are provided by residues 10 to 16 (GGTGYIG), Arg35, and Lys44. The active-site Proton acceptor is Lys136. Arg140 contacts NADP(+). His268 lines the substrate pocket.

It belongs to the NmrA-type oxidoreductase family. Isoflavone reductase subfamily. In terms of assembly, dimer. In terms of tissue distribution, expressed in seed coats, but not in embryos, leaves, stems and roots.

Reductase involved in lignan biosynthesis. Catalyzes the sequential conversion of pinoresinol into lariciresinol and of lariciresinol into secoisolariciresinol. Abstracts the 4R-hydride from the NADPH cofactor during catalysis. The chain is Bifunctional pinoresinol-lariciresinol reductase from Linum usitatissimum (Flax).